We begin with the raw amino-acid sequence, 748 residues long: Catalase-peroxidase (748 aa).

A cross-link (tryptophyl-tyrosyl-methioninium (Trp-Tyr) (with M-264)) is located at residues 92–238 (WHSAGTYRTG…LAAVQMGLIY (147 aa)). The active-site Proton acceptor is the His-93. Positions 238–264 (YVNPEGPDGNPDPLLAAKDIRDTFGRM) form a cross-link, tryptophyl-tyrosyl-methioninium (Tyr-Met) (with W-92). His-279 provides a ligand contact to heme b.

The protein belongs to the peroxidase family. Peroxidase/catalase subfamily. As to quaternary structure, homodimer or homotetramer. Heme b serves as cofactor. In terms of processing, formation of the three residue Trp-Tyr-Met cross-link is important for the catalase, but not the peroxidase activity of the enzyme.

It carries out the reaction H2O2 + AH2 = A + 2 H2O. The catalysed reaction is 2 H2O2 = O2 + 2 H2O. Functionally, bifunctional enzyme with both catalase and broad-spectrum peroxidase activity. The chain is Catalase-peroxidase from Xanthomonas campestris pv. campestris (strain 8004).